The chain runs to 645 residues: ATP-dependent zinc metalloprotease FtsH 3 (645 aa).

The Cytoplasmic segment spans residues 1–11 (MQNKRNQSRVL). The chain crosses the membrane as a helical span at residues 12-32 (WLLLIYITIGIFIYVGVNSLI). Residues 33 to 110 (GTPDVSKIEY…YVRSLENSWW (78 aa)) lie on the Periplasmic side of the membrane. Residues 111–131 (ISILTFLLPVFLLIFLFTFLF) form a helical membrane-spanning segment. The Cytoplasmic segment spans residues 132–645 (RSSGGGANQG…ENNLIERKGI (514 aa)). ATP is bound at residue 202–209 (GEPGTGKT). Residue H424 coordinates Zn(2+). E425 is a catalytic residue. 2 residues coordinate Zn(2+): H428 and D501.

In the central section; belongs to the AAA ATPase family. This sequence in the C-terminal section; belongs to the peptidase M41 family. Homohexamer. Requires Zn(2+) as cofactor.

It localises to the cell inner membrane. Acts as a processive, ATP-dependent zinc metallopeptidase for both cytoplasmic and membrane proteins. Plays a role in the quality control of integral membrane proteins. The chain is ATP-dependent zinc metalloprotease FtsH 3 from Petrotoga mobilis (strain DSM 10674 / SJ95).